Here is a 215-residue protein sequence, read N- to C-terminus: Heart- and neural crest derivatives-expressed protein 1 (215 aa).

Disordered stretches follow at residues 53–109 (APDF…RTES) and 166–198 (LKKADGGRESKRKRELQQHEGFPPALGPVEKRI). Positions 65–89 (AAAAATAYGPDARPGQSPGRLEALG) are enriched in low complexity. Positions 92–104 (LGRRKGSGPKKER) are enriched in basic residues. Positions 94 to 146 (RRKGSGPKKERRRTESINSAFAELRECIPNVPADTKLSKIKTLRLATSYIAYL) constitute a bHLH domain. T107 carries the phosphothreonine; by PLK4 modification. A Phosphoserine; by PLK4 modification is found at S109.

As to quaternary structure, efficient DNA binding requires dimerization with another bHLH protein. Forms homodimers and heterodimers with TCF3 gene products E12 and E47, HAND2 and HEY1, HEY2 and HEYL (hairy-related transcription factors). Interacts with MDFIC. Interacts with SOX15; the interaction enhances HAND1-induced differentiation of trophoblast giant cells. Phosphorylation by PLK4 disrupts the interaction with MDFIC and leads to translocation into the nucleoplasm, allowing dimerization and transcription factor activity. As to expression, heart.

Its subcellular location is the nucleus. The protein resides in the nucleoplasm. It is found in the nucleolus. Functionally, transcription factor that plays an essential role in both trophoblast giant cell differentiation and in cardiac morphogenesis. Binds the DNA sequence 5'-NRTCTG-3' (non-canonical E-box). Acts as a transcriptional repressor of SOX15. In the adult, could be required for ongoing expression of cardiac-specific genes. The protein is Heart- and neural crest derivatives-expressed protein 1 (HAND1) of Homo sapiens (Human).